The following is a 619-amino-acid chain: Zinc finger protein 668 (619 aa).

N-acetylmethionine is present on M1. Position 10 is a phosphoserine (S10). A C2H2-type 1 zinc finger spans residues 22-44 (YKCLFCTKTFPNAPRAARHAATH). Residues 36–74 (RAARHAATHTPTDCTEEVREAQPKVDTEPKAEEASGDKV) are disordered. Positions 51–71 (EEVREAQPKVDTEPKAEEASG) are enriched in basic and acidic residues. Residues K59, K65, and K80 each participate in a glycyl lysine isopeptide (Lys-Gly) (interchain with G-Cter in SUMO2) cross-link. 11 C2H2-type zinc fingers span residues 84–106 (YACPLCPKAYKTAPELRSHGRSH), 112–134 (FPCPECGRRFMQPVCLRVHLASH), 140–162 (FRCTHCPKAYGTLSKLKIHQRGH), 168–190 (YACPDCGKSFADPSVFRKHRRTH), 196–218 (YSCERCGKAYAELKDLRNHERSH), 224–246 (FLCSECGKSFSRSSSLTCHQRIH), 252–274 (YRCPACGKGFTQLSSYQSHERTH), 280–302 (FLCPRCGRMFSDPSSFRRHQRAH), 308–330 (YRCEKCGKDFRQPADLAMHRRVH), 336–358 (FKCLQCDKTFVASWDLKRHALVH), and 364–386 (FRCEECGRAFAERASLTKHSRMH). A Glycyl lysine isopeptide (Lys-Gly) (interchain with G-Cter in SUMO2) cross-link involves residue K154. Residue S387 is modified to Phosphoserine. A C2H2-type 13 zinc finger spans residues 392–414 (FHCNACGKSFVVLSSLRKHERTH). The segment at 491-513 (VGEAPSTLGDAGEVGGEETDEKP) is disordered. K512 participates in a covalent cross-link: Glycyl lysine isopeptide (Lys-Gly) (interchain with G-Cter in SUMO2). 3 consecutive C2H2-type zinc fingers follow at residues 516 to 538 (FVCRECKETFSTLTLLRRHERSH), 544 to 566 (FPCTQCGKSFSDRAGLRKHSRTH), and 572 to 594 (YSCSQCPKAFLSASDLRKHERTH).

The protein belongs to the krueppel C2H2-type zinc-finger protein family.

The protein localises to the nucleus. Functionally, may be involved in transcriptional regulation. May play a role in DNA repair process. The sequence is that of Zinc finger protein 668 (Znf668) from Mus musculus (Mouse).